The following is a 283-amino-acid chain: Protein FAM170B (283 aa).

Positions 1-11 (MKCYFTDHRGE) are enriched in basic and acidic residues. Disordered regions lie at residues 1–58 (MKCY…REEG) and 246–283 (AQGQAHDQQLEEEQSPSDNSECSRPQGEVLSAQQQEKQ).

Belongs to the FAM170 family. Interacts with GOPC. As to expression, exclusively expressed in adult testis.

Its subcellular location is the cytoplasmic vesicle. The protein localises to the secretory vesicle. The protein resides in the acrosome. It is found in the acrosome outer membrane. Functionally, plays a role in fertilization through the acrosome reaction. The sequence is that of Protein FAM170B from Homo sapiens (Human).